A 109-amino-acid polypeptide reads, in one-letter code: Cytochrome c oxidase subunit 6A1, mitochondrial (109 aa).

The transit peptide at 1-24 (MAAAAGSRVFGLLGRSRLQLSRCM) directs the protein to the mitochondrion. The Mitochondrial matrix portion of the chain corresponds to 25–34 (SSGAHGEEGS). A helical membrane pass occupies residues 35 to 59 (ARMWKALTYFVALPGVGVSMLNVFL). The Mitochondrial intermembrane segment spans residues 60 to 109 (KSHHGEEERPEFVAYPHLRIRSKPFPWGDGNHTLFHNPHVNPLPTGYEDE).

Belongs to the cytochrome c oxidase subunit 6A family. As to quaternary structure, component of the cytochrome c oxidase (complex IV, CIV), a multisubunit enzyme composed of 14 subunits. The complex is composed of a catalytic core of 3 subunits MT-CO1, MT-CO2 and MT-CO3, encoded in the mitochondrial DNA, and 11 supernumerary subunits COX4I1 (or COX4I2), COX5A, COX5B, COX6A2 (or COX6A1), COX6B1 (or COX6B2), COX6C, COX7A1 (or COX7A2), COX7B, COX7C, COX8B and NDUFA4, which are encoded in the nuclear genome. The complex exists as a monomer or a dimer and forms supercomplexes (SCs) in the inner mitochondrial membrane with NADH-ubiquinone oxidoreductase (complex I, CI) and ubiquinol-cytochrome c oxidoreductase (cytochrome b-c1 complex, complex III, CIII), resulting in different assemblies (supercomplex SCI(1)III(2)IV(1) and megacomplex MCI(2)III(2)IV(2)).

The protein resides in the mitochondrion inner membrane. It functions in the pathway energy metabolism; oxidative phosphorylation. In terms of biological role, component of the cytochrome c oxidase, the last enzyme in the mitochondrial electron transport chain which drives oxidative phosphorylation. The respiratory chain contains 3 multisubunit complexes succinate dehydrogenase (complex II, CII), ubiquinol-cytochrome c oxidoreductase (cytochrome b-c1 complex, complex III, CIII) and cytochrome c oxidase (complex IV, CIV), that cooperate to transfer electrons derived from NADH and succinate to molecular oxygen, creating an electrochemical gradient over the inner membrane that drives transmembrane transport and the ATP synthase. Cytochrome c oxidase is the component of the respiratory chain that catalyzes the reduction of oxygen to water. Electrons originating from reduced cytochrome c in the intermembrane space (IMS) are transferred via the dinuclear copper A center (CU(A)) of subunit 2 and heme A of subunit 1 to the active site in subunit 1, a binuclear center (BNC) formed by heme A3 and copper B (CU(B)). The BNC reduces molecular oxygen to 2 water molecules unsing 4 electrons from cytochrome c in the IMS and 4 protons from the mitochondrial matrix. The polypeptide is Cytochrome c oxidase subunit 6A1, mitochondrial (COX6A1) (Bos taurus (Bovine)).